The primary structure comprises 459 residues: Cobyrinate a,c-diamide synthase (459 aa).

The 195-residue stretch at 252–446 (TLALADDEAF…LHVHFAQRPE (195 aa)) folds into the GATase cobBQ-type domain. Cysteine 334 functions as the Nucleophile in the catalytic mechanism.

This sequence belongs to the CobB/CbiA family. Monomer. It depends on Mg(2+) as a cofactor.

The catalysed reaction is cob(II)yrinate + 2 L-glutamine + 2 ATP + 2 H2O = cob(II)yrinate a,c diamide + 2 L-glutamate + 2 ADP + 2 phosphate + 2 H(+). Its pathway is cofactor biosynthesis; adenosylcobalamin biosynthesis; cob(II)yrinate a,c-diamide from sirohydrochlorin (anaerobic route): step 10/10. Catalyzes the ATP-dependent amidation of the two carboxylate groups at positions a and c of cobyrinate, using either L-glutamine or ammonia as the nitrogen source. Is able to use other nucleotide triphosphates as substrate, such as GTP or UTP, although less efficiently than ATP. In Salmonella typhimurium (strain LT2 / SGSC1412 / ATCC 700720), this protein is Cobyrinate a,c-diamide synthase.